The chain runs to 396 residues: Tryptophan synthase beta chain (396 aa).

N6-(pyridoxal phosphate)lysine is present on Lys86.

This sequence belongs to the TrpB family. In terms of assembly, tetramer of two alpha and two beta chains. Requires pyridoxal 5'-phosphate as cofactor.

The enzyme catalyses (1S,2R)-1-C-(indol-3-yl)glycerol 3-phosphate + L-serine = D-glyceraldehyde 3-phosphate + L-tryptophan + H2O. Its pathway is amino-acid biosynthesis; L-tryptophan biosynthesis; L-tryptophan from chorismate: step 5/5. The beta subunit is responsible for the synthesis of L-tryptophan from indole and L-serine. This Francisella tularensis subsp. tularensis (strain FSC 198) protein is Tryptophan synthase beta chain.